A 911-amino-acid chain; its full sequence is Alpha-actinin-4 (911 aa).

An actin-binding region spans residues 1-269 (MVDYHAANQA…YVSSFYHAFS (269 aa)). Positions 12-26 (QYGPSSGGNGTGGGG) are interaction with VCL. The segment at 12-31 (QYGPSSGGNGTGGGGGMGDY) is disordered. The segment covering 16 to 29 (SSGGNGTGGGGGMG) has biased composition (gly residues). Position 31 is a phosphotyrosine (Tyr31). The interaction with VCL stretch occupies residues 40–61 (RDLLLDPAWEKQQRKTFTAWCN). 2 consecutive Calponin-homology (CH) domains span residues 50 to 154 (KQQR…LRFA) and 163 to 269 (TSAK…HAFS). An LXXLL motif motif is present at residues 84 to 88 (LMLLL). The tract at residues 108 to 126 (KINNVNKALDFIASKGVKL) is interaction with VCL. Residue Lys114 is modified to N6-acetyllysine. The interval 177–192 (TAPYKNVNVQNFHISW) is polyphosphoinositide (PIP2)-binding. Lys214 bears the N6-acetyllysine mark. Thr249 is modified (phosphothreonine). Spectrin repeat units lie at residues 293–403 (HLME…WLLN), 413–518 (HLAE…ALEK), 528–639 (QLHL…ALLE), and 649–752 (HLRR…EVEN). 2 positions are modified to N6-acetyllysine: Lys592 and Lys625. Ser696 bears the Phosphoserine mark. Residues 736 to 911 (WEQLLTTIAR…STALYGESDL (176 aa)) form a mediates interaction with MICALL2 region. EF-hand domains are found at residues 765-800 (EQMQEFRASFNHFDKDHGGALGPEEFKACLISLGYD) and 806-841 (QGDAEFNRIMSVVDPNHSGLVTFQAFIDFMSRETTD). Asp778 contributes to the Ca(2+) binding site. Lys779 bears the N6-acetyllysine mark. Ca(2+) is bound by residues Asp780 and Glu789. Position 859 is an N6-acetyllysine (Lys859). Ser909 is subject to Phosphoserine.

It belongs to the alpha-actinin family. As to quaternary structure, homodimer; antiparallel. Interacts with MAGI1. Interacts with MICALL2 (preferentially in opened conformation); stimulated by RAB13 activation. Identified in a IGF2BP1-dependent mRNP granule complex containing untranslated mRNAs. Component of the CART complex, at least composed of ACTN4, HGS/HRS, MYO5B and TRIM3. Binds TRIM3 at the N-terminus. Interacts with PDLIM2. Identified in a complex with CASK, IQGAP1, MAGI2, NPHS1, SPTAN1 and SPTBN1. Interacts with PPARG and RARA. Binds to VCL; this interaction triggers VCL conformational changes. Interacts with SEPTIN14. Interacts with IGSF8. Expressed in the foot process layer of podocytes in the kidney glomerulus but not in tubules (at protein level).

It is found in the nucleus. It localises to the cytoplasm. The protein localises to the cell junction. Its subcellular location is the cytoskeleton. The protein resides in the stress fiber. It is found in the perinuclear region. F-actin cross-linking protein which is thought to anchor actin to a variety of intracellular structures. This is a bundling protein. Probably involved in vesicular trafficking via its association with the CART complex. The CART complex is necessary for efficient transferrin receptor recycling but not for EGFR degradation. Involved in tight junction assembly in epithelial cells probably through interaction with MICALL2. Links MICALL2 to the actin cytoskeleton and recruits it to the tight junctions. May also function as a transcriptional coactivator, stimulating transcription mediated by the nuclear hormone receptors PPARG and RARA. Association with IGSF8 regulates the immune synapse formation and is required for efficient T-cell activation. This is Alpha-actinin-4 from Rattus norvegicus (Rat).